A 416-amino-acid chain; its full sequence is MSLVAIGINHKTATVDLREKVAFSPDKIHDAMKSLASRTRSGEAVIVSTCNRTELYCNNGDEADIIEWLEEYHGLDHQDVAPCLYNYHGQAAVKHLMRVASGLDSLILGEPQILGQVKQAFVKAKEAGTVALTIDRLFQNTFSVAKKVRTETEIGAAAVSVAFAAVSMAKHIFSSLSTTKVLLIGAGETIELVAKHLKDNGVASMVVANRTLERAQSMCEEFNATAITLAQIPDFLPKADIVISSTASPLPILGKGMVEKALKQRRHQPMLLVDIAVPRDIEPEVADLDDAFLYTVDDLHSIIEQNKASRKEAAEQAELITEEQSYLFMDWVRSLESVDSIREYRSQSMAIKDELVERALNKLAQGGDTEQVLIELANRLTNRLIHAPTQALTVASRQGDLNTLGQLRTALGLDKN.

Residues 49–52 (TCNR), Ser-105, 110–112 (EPQ), and Gln-116 each bind substrate. Catalysis depends on Cys-50, which acts as the Nucleophile. NADP(+) is bound at residue 185–190 (GAGETI).

This sequence belongs to the glutamyl-tRNA reductase family. In terms of assembly, homodimer.

It catalyses the reaction (S)-4-amino-5-oxopentanoate + tRNA(Glu) + NADP(+) = L-glutamyl-tRNA(Glu) + NADPH + H(+). Its pathway is porphyrin-containing compound metabolism; protoporphyrin-IX biosynthesis; 5-aminolevulinate from L-glutamyl-tRNA(Glu): step 1/2. Catalyzes the NADPH-dependent reduction of glutamyl-tRNA(Glu) to glutamate 1-semialdehyde (GSA). The sequence is that of Glutamyl-tRNA reductase from Shewanella sp. (strain MR-7).